A 111-amino-acid chain; its full sequence is NADH-ubiquinone oxidoreductase chain 4 (111 aa).

The helical transmembrane segment at 35-55 (LITSLFSWLDITVFLTGLSAF) threads the bilayer.

This sequence belongs to the complex I subunit 4 family.

It is found in the mitochondrion membrane. It carries out the reaction a ubiquinone + NADH + 5 H(+)(in) = a ubiquinol + NAD(+) + 4 H(+)(out). Its function is as follows. Core subunit of the mitochondrial membrane respiratory chain NADH dehydrogenase (Complex I) that is believed to belong to the minimal assembly required for catalysis. Complex I functions in the transfer of electrons from NADH to the respiratory chain. The immediate electron acceptor for the enzyme is believed to be ubiquinone. The protein is NADH-ubiquinone oxidoreductase chain 4 (MT-ND4) of Caiman crocodilus (Spectacled caiman).